The chain runs to 236 residues: Small ribosomal subunit protein uS3 (236 aa).

A KH type-2 domain is found at 39 to 107; sequence IREILHKELK…DVVINIVEIR (69 aa). A disordered region spans residues 213 to 236; the sequence is MAQDKRMNEGGGESSQPRSRRDAA.

It belongs to the universal ribosomal protein uS3 family. Part of the 30S ribosomal subunit. Forms a tight complex with proteins S10 and S14.

In terms of biological role, binds the lower part of the 30S subunit head. Binds mRNA in the 70S ribosome, positioning it for translation. The sequence is that of Small ribosomal subunit protein uS3 from Bradyrhizobium sp. (strain BTAi1 / ATCC BAA-1182).